A 445-amino-acid polypeptide reads, in one-letter code: GTPase Der (445 aa).

EngA-type G domains follow at residues 3 to 166 and 180 to 353; these read PVIA…AERV and IRIG…ESCY. GTP-binding positions include 9–16, 56–60, 118–121, 186–193, 233–237, and 298–301; these read GRPNVGKS, DTGGI, NKTD, DTAGI, and NKWD. The KH-like domain occupies 354 to 438; sequence AKWTTNRLTR…PIIFEFKSAE (85 aa).

It belongs to the TRAFAC class TrmE-Era-EngA-EngB-Septin-like GTPase superfamily. EngA (Der) GTPase family. Associates with the 50S ribosomal subunit.

Its function is as follows. GTPase that plays an essential role in the late steps of ribosome biogenesis. This chain is GTPase Der, found in Marinomonas sp. (strain MWYL1).